Here is a 418-residue protein sequence, read N- to C-terminus: Tyrosine--tRNA ligase (418 aa).

Tyr34 is a binding site for L-tyrosine. The short motif at 39 to 48 (PTADSLHLGH) is the 'HIGH' region element. Positions 169 and 173 each coordinate L-tyrosine. A 'KMSKS' region motif is present at residues 229–233 (KFGKS). Lys232 contributes to the ATP binding site. One can recognise an S4 RNA-binding domain in the interval 352–418 (LNLVDMLVTA…GKKKYAVLTY (67 aa)).

This sequence belongs to the class-I aminoacyl-tRNA synthetase family. TyrS type 1 subfamily. In terms of assembly, homodimer.

The protein localises to the cytoplasm. It catalyses the reaction tRNA(Tyr) + L-tyrosine + ATP = L-tyrosyl-tRNA(Tyr) + AMP + diphosphate + H(+). In terms of biological role, catalyzes the attachment of tyrosine to tRNA(Tyr) in a two-step reaction: tyrosine is first activated by ATP to form Tyr-AMP and then transferred to the acceptor end of tRNA(Tyr). The sequence is that of Tyrosine--tRNA ligase from Streptococcus pyogenes serotype M5 (strain Manfredo).